Consider the following 221-residue polypeptide: 7-cyano-7-deazaguanine synthase (221 aa).

7 to 17 (LSGGLDSAVSL) is an ATP binding site. Zn(2+)-binding residues include C192, C200, C203, and C206.

This sequence belongs to the QueC family. In terms of assembly, homodimer. It depends on Zn(2+) as a cofactor.

It carries out the reaction 7-carboxy-7-deazaguanine + NH4(+) + ATP = 7-cyano-7-deazaguanine + ADP + phosphate + H2O + H(+). It participates in purine metabolism; 7-cyano-7-deazaguanine biosynthesis. Catalyzes the ATP-dependent conversion of 7-carboxy-7-deazaguanine (CDG) to 7-cyano-7-deazaguanine (preQ(0)). This chain is 7-cyano-7-deazaguanine synthase, found in Pelotomaculum thermopropionicum (strain DSM 13744 / JCM 10971 / SI).